The sequence spans 674 residues: MSDAVDIQREWSELAQEVRKHRELYYNGEPSIPDADFDELFQRLLALEAEHPELQTPDSPTQQVGAAPEGAVDIEHLERLYSLDNVFSAEELQDWLDRTPAEAYLTELKIDGLSIDLVYRDGKLVTAATRGDGRVGEDITANARVIPDIPHELTGTDEYPVPSLVEVRGEVYMRPDEFEEINAARREDGKPTFANPRNAAAGGLRMKDPEDVKKRRLHMVCHGIGARERFQPTSQHDAYKALEAWGFPVSPYTQRVTTAKEVQERVTYWEEHRHDAYFEMDGLVIKVDDLASQRALGATSRAPRWAIAYKYPPEEVTTKLLNIEVGVGRTGRVTPFAIMEPVFVSGSTVSMATLHNQFEVKNKNVLIGDTIIIRKAGEIIPEVLGPVLDKRDGSETEWVFPENCPACGTKLAPQKEGDQDWRCPNTRSCPAQLAARLEYLASRKALDIGELGEKAAADLISSGVLEDEADLFDLDEQALLKSSVYTTQKGALNASGKKLLENLKTARQAEFWRVLVALSIRHVGPIAARALATRFGSMEVLRAASVEELADTDGVGTIIAESFKQWFEVDWHDNIVQKWTAAGVTMEEESSDKPAQTLEGITVVVTGTLENFTRDSAKEAIITRGGKASSSVSKKTNYVVVGENAGSKEQKARDLGLTILDEEGFTRLLETGEA.

NAD(+)-binding positions include 34-38 (DADFD), 82-83 (SL), and glutamate 107. Lysine 109 acts as the N6-AMP-lysine intermediate in catalysis. Residues arginine 130, glutamate 170, lysine 286, and lysine 310 each contribute to the NAD(+) site. The Zn(2+) site is built by cysteine 404, cysteine 407, cysteine 423, and cysteine 429. The 82-residue stretch at 593 to 674 (KPAQTLEGIT…FTRLLETGEA (82 aa)) folds into the BRCT domain.

Belongs to the NAD-dependent DNA ligase family. LigA subfamily. The cofactor is Mg(2+). Mn(2+) is required as a cofactor.

The catalysed reaction is NAD(+) + (deoxyribonucleotide)n-3'-hydroxyl + 5'-phospho-(deoxyribonucleotide)m = (deoxyribonucleotide)n+m + AMP + beta-nicotinamide D-nucleotide.. Its function is as follows. DNA ligase that catalyzes the formation of phosphodiester linkages between 5'-phosphoryl and 3'-hydroxyl groups in double-stranded DNA using NAD as a coenzyme and as the energy source for the reaction. It is essential for DNA replication and repair of damaged DNA. The sequence is that of DNA ligase from Corynebacterium aurimucosum (strain ATCC 700975 / DSM 44827 / CIP 107346 / CN-1) (Corynebacterium nigricans).